Consider the following 422-residue polypeptide: Inhibitor of growth protein 1 (422 aa).

Residues 261–349 (ELGDTAGNSG…EASPADLPID (89 aa)) are disordered. Lys278 participates in a covalent cross-link: Glycyl lysine isopeptide (Lys-Gly) (interchain with G-Cter in SUMO2). Over residues 297 to 314 (RNNENRENASSNHDHDDG) the composition is skewed to basic and acidic residues. The segment covering 322-334 (KKAKTSKKKKRSK) has biased composition (basic residues). A PHD-type zinc finger spans residues 353–402 (PTYCLCNQVSYGEMIGCDNDECPIEWFHFSCVGLNHKPKGKWYCPKCRGE). 8 residues coordinate Zn(2+): Cys356, Cys358, Cys369, Cys374, His380, Cys383, Cys396, and Cys399. Residues 405–422 (KTMDKALEKSKKERAYNR) are PBR.

This sequence belongs to the ING family. Interacts with H3K4me3 and to a lesser extent with H3K4me2. Interacts with TP53. Isoform 2 interacts with RSL1D1. Isoform 2 was expressed in all normal tissues and cells examined, as well as in all breast cancer and melanoma cell lines examined. Isoform 3 was expressed in testis, liver, and kidney, weakly expressed in colon and brain and not expressed in breast and cultured melanocytes. Isoform 4 was highly expressed in testis and weakly expressed in brain, but not expressed in breast, colon, kidney, melanocytes, breast cancer or melanoma cell lines.

The protein resides in the nucleus. Its function is as follows. Cooperates with p53/TP53 in the negative regulatory pathway of cell growth by modulating p53-dependent transcriptional activation. Implicated as a tumor suppressor gene. In Homo sapiens (Human), this protein is Inhibitor of growth protein 1 (ING1).